The primary structure comprises 392 residues: Protein O-glucosyltransferase 1 (392 aa).

The signal sequence occupies residues 1–23; the sequence is MERRAGSRLRAWMLLLLLCPVQG. 4 cysteine pairs are disulfide-bonded: Cys49–Cys56, Cys54–Cys357, Cys102–Cys108, and Cys263–Cys286. N-linked (GlcNAc...) asparagine glycosylation occurs at Asn53. An interaction with the consensus sequence C-X-S-X-[PA]-C in peptide substrates region spans residues 103–107; it reads MFPSR. Residue Asp133 is the Proton donor/acceptor of the active site. The interaction with the consensus sequence C-X-S-X-[PA]-C in peptide substrates stretch occupies residues 172–178; sequence AVWPLYP. Tyr177 provides a ligand contact to UDP-alpha-D-glucose. Asn204 is a glycosylation site (N-linked (GlcNAc...) asparagine). UDP-alpha-D-glucose is bound by residues Ser212, Arg218, and 274–279; that span reads VAASFR. N-linked (GlcNAc...) asparagine glycosylation is present at Asn373. Positions 389 to 392 match the Prevents secretion from ER motif; the sequence is KTEL.

It belongs to the glycosyltransferase 90 family. As to expression, widely expressed in newborn and adult tissues (at protein level).

It is found in the endoplasmic reticulum lumen. The catalysed reaction is L-seryl-[EGF-like domain protein] + UDP-alpha-D-xylose = 3-O-(beta-D-xylosyl)-L-seryl-[EGF-like domain protein] + UDP + H(+). The enzyme catalyses L-seryl-[EGF-like domain protein] + UDP-alpha-D-glucose = 3-O-(beta-D-glucosyl)-L-seryl-[EGF-like domain protein] + UDP + H(+). The protein operates within protein modification; protein glycosylation. Dual specificity glycosyltransferase that catalyzes the transfer of glucose and xylose from UDP-glucose and UDP-xylose, respectively, to a serine residue found in the consensus sequence of C-X-S-X-P-C. Specifically targets extracellular EGF repeats of protein such as CRB2, F7, F9 and NOTCH2. Acts as a positive regulator of Notch signaling by mediating O-glucosylation of Notch, leading to regulate muscle development. Notch glucosylation does not affect Notch ligand binding. Required during early development to promote gastrulation: acts by mediating O-glucosylation of CRB2, which is required for CRB2 localization to the cell membrane. The chain is Protein O-glucosyltransferase 1 from Mus musculus (Mouse).